Consider the following 546-residue polypeptide: Cytochrome P450 monooxygenase alnH (546 aa).

Residues 11–31 (VPYSVPLLGSTVVILIGFIAI) traverse the membrane as a helical segment. Asparagine 146, asparagine 258, and asparagine 425 each carry an N-linked (GlcNAc...) asparagine glycan. A heme-binding site is contributed by cysteine 445.

It belongs to the cytochrome P450 family. The cofactor is heme.

Its subcellular location is the membrane. It participates in polyketide biosynthesis. Functionally, cytochrome P450 monooxygenase; part of the gene cluster that mediates the biosynthesis of asperlin, a polyketide showing anti-inflammatory, antitumor and antibiotic activities. The first step of the asperlin biosynthesis is the production of the intermediate 2,4,6-octatrienoic acid by the highly redusing polyketide synthase alnA with cleavage of the PKS product by the esterase alnB. 2,4,6-octatrienoic acid is further converted to asperlin via several steps involving the remaining enzymes from the cluster. The chain is Cytochrome P450 monooxygenase alnH from Emericella nidulans (strain FGSC A4 / ATCC 38163 / CBS 112.46 / NRRL 194 / M139) (Aspergillus nidulans).